The chain runs to 597 residues: Elongation factor 4 (597 aa).

Positions 2–184 (KNIRNFSIIA…RLVRDIPAPE (183 aa)) constitute a tr-type G domain. Residues 14–19 (DHGKST) and 131–134 (NKID) contribute to the GTP site.

Belongs to the TRAFAC class translation factor GTPase superfamily. Classic translation factor GTPase family. LepA subfamily.

It is found in the cell inner membrane. It carries out the reaction GTP + H2O = GDP + phosphate + H(+). Required for accurate and efficient protein synthesis under certain stress conditions. May act as a fidelity factor of the translation reaction, by catalyzing a one-codon backward translocation of tRNAs on improperly translocated ribosomes. Back-translocation proceeds from a post-translocation (POST) complex to a pre-translocation (PRE) complex, thus giving elongation factor G a second chance to translocate the tRNAs correctly. Binds to ribosomes in a GTP-dependent manner. The polypeptide is Elongation factor 4 (Edwardsiella ictaluri (strain 93-146)).